The following is a 206-amino-acid chain: Ras-related protein RABG3e (206 aa).

A GTP-binding site is contributed by 15 to 22; the sequence is GDSGVGKT. An Effector region motif is present at residues 37 to 45; sequence YKATIGADF. Residues 63–67, 125–128, and 158–159 each bind GTP; these read DTAGQ, NKID, and SA. S-geranylgeranyl cysteine attachment occurs at residues C204 and C206. C206 is modified (cysteine methyl ester).

Belongs to the small GTPase superfamily. Rab family.

The protein resides in the cell membrane. Intracellular vesicle trafficking and protein transport. May play a role in adaptation to stress by recylcing macromolecules in specific cellular compartments. The protein is Ras-related protein RABG3e (RABG3E) of Arabidopsis thaliana (Mouse-ear cress).